We begin with the raw amino-acid sequence, 119 residues long: UPF0292 protein TV1259 (119 aa).

The 83-residue stretch at 11 to 93 folds into the Toprim domain; the sequence is SIPIIVEGRN…YVDLYLWNFI (83 aa). Mg(2+) is bound by residues Glu17, Asp62, and Asp64.

Belongs to the UPF0292 family. Mg(2+) serves as cofactor.

The chain is UPF0292 protein TV1259 from Thermoplasma volcanium (strain ATCC 51530 / DSM 4299 / JCM 9571 / NBRC 15438 / GSS1).